Consider the following 383-residue polypeptide: MAKHLFTSESVSEGHPDKIADQISDAVLDAIIEQDPKARVACETYVKTGMVMVGGEVTTSAWVDIEEITRETVREIGYVHSDMGFDADSCAVLNTIGKQSPDINQGVDKADPKDQGAGDQGIMFGYATNETPILMPAPITYSHLLVKKQAEVRKSGKLDFLRPDAKSQVTFQYDQGKIVGIDAVVLSTQHCDSVTTPDLREAVMEEIIKPVLPAEWINKDTNFFINPTGRFVIGGPMGDCGLTGRKIIVDTYGGAARHGGGAFSGKDPSKVDRSAAYAARYVAKNIVAAGMADRCEIQLSYAIGVADPTSIMVETFGTEKVAHEIIIEAVRQNFDLRPYGLQEMLNLLQPIYKQTAAYGHFGREEFPWEATDKAAILADFAGL.

Residue His-15 coordinates ATP. Asp-17 provides a ligand contact to Mg(2+). Residue Glu-43 participates in K(+) binding. L-methionine-binding residues include Glu-56 and Gln-99. A flexible loop region spans residues 99–109; sequence QSPDINQGVDK. Residues 164–166, 230–231, Asp-239, 245–246, Ala-262, and Lys-266 contribute to the ATP site; these read DAK, RF, and RK. Asp-239 provides a ligand contact to L-methionine. Lys-270 is a binding site for L-methionine.

The protein belongs to the AdoMet synthase family. Homotetramer; dimer of dimers. The cofactor is Mg(2+). K(+) is required as a cofactor.

The protein resides in the cytoplasm. The catalysed reaction is L-methionine + ATP + H2O = S-adenosyl-L-methionine + phosphate + diphosphate. It participates in amino-acid biosynthesis; S-adenosyl-L-methionine biosynthesis; S-adenosyl-L-methionine from L-methionine: step 1/1. Catalyzes the formation of S-adenosylmethionine (AdoMet) from methionine and ATP. The overall synthetic reaction is composed of two sequential steps, AdoMet formation and the subsequent tripolyphosphate hydrolysis which occurs prior to release of AdoMet from the enzyme. The protein is S-adenosylmethionine synthase of Vibrio atlanticus (strain LGP32) (Vibrio splendidus (strain Mel32)).